The sequence spans 189 residues: Protein F29A7.6 (189 aa).

The tract at residues 124–161 is disordered; that stretch reads KSLGGQKLAALDKKSQSKRERRQQNERNEETTGGRRFN. The span at 133 to 161 shows a compositional bias: basic and acidic residues; that stretch reads ALDKKSQSKRERRQQNERNEETTGGRRFN.

This sequence belongs to the MPP6 family.

The protein is Protein F29A7.6 of Caenorhabditis elegans.